The chain runs to 258 residues: Imidazole glycerol phosphate synthase subunit HisF (258 aa).

Active-site residues include D12 and D131.

Belongs to the HisA/HisF family. Heterodimer of HisH and HisF.

The protein resides in the cytoplasm. It catalyses the reaction 5-[(5-phospho-1-deoxy-D-ribulos-1-ylimino)methylamino]-1-(5-phospho-beta-D-ribosyl)imidazole-4-carboxamide + L-glutamine = D-erythro-1-(imidazol-4-yl)glycerol 3-phosphate + 5-amino-1-(5-phospho-beta-D-ribosyl)imidazole-4-carboxamide + L-glutamate + H(+). Its pathway is amino-acid biosynthesis; L-histidine biosynthesis; L-histidine from 5-phospho-alpha-D-ribose 1-diphosphate: step 5/9. Functionally, IGPS catalyzes the conversion of PRFAR and glutamine to IGP, AICAR and glutamate. The HisF subunit catalyzes the cyclization activity that produces IGP and AICAR from PRFAR using the ammonia provided by the HisH subunit. The polypeptide is Imidazole glycerol phosphate synthase subunit HisF (Nitrosomonas europaea (strain ATCC 19718 / CIP 103999 / KCTC 2705 / NBRC 14298)).